A 321-amino-acid polypeptide reads, in one-letter code: tRNA U34 carboxymethyltransferase (321 aa).

Carboxy-S-adenosyl-L-methionine contacts are provided by residues Lys-90, Trp-104, Lys-109, Gly-129, 151-153 (DPT), 180-181 (IE), Met-195, Tyr-199, and Arg-314.

Belongs to the class I-like SAM-binding methyltransferase superfamily. CmoB family. As to quaternary structure, homotetramer.

It carries out the reaction carboxy-S-adenosyl-L-methionine + 5-hydroxyuridine(34) in tRNA = 5-carboxymethoxyuridine(34) in tRNA + S-adenosyl-L-homocysteine + H(+). In terms of biological role, catalyzes carboxymethyl transfer from carboxy-S-adenosyl-L-methionine (Cx-SAM) to 5-hydroxyuridine (ho5U) to form 5-carboxymethoxyuridine (cmo5U) at position 34 in tRNAs. The polypeptide is tRNA U34 carboxymethyltransferase (Haemophilus influenzae (strain ATCC 51907 / DSM 11121 / KW20 / Rd)).